Consider the following 505-residue polypeptide: Aspartyl/glutamyl-tRNA(Asn/Gln) amidotransferase subunit B (505 aa).

It belongs to the GatB/GatE family. GatB subfamily. In terms of assembly, heterotrimer of A, B and C subunits.

It catalyses the reaction L-glutamyl-tRNA(Gln) + L-glutamine + ATP + H2O = L-glutaminyl-tRNA(Gln) + L-glutamate + ADP + phosphate + H(+). It carries out the reaction L-aspartyl-tRNA(Asn) + L-glutamine + ATP + H2O = L-asparaginyl-tRNA(Asn) + L-glutamate + ADP + phosphate + 2 H(+). Allows the formation of correctly charged Asn-tRNA(Asn) or Gln-tRNA(Gln) through the transamidation of misacylated Asp-tRNA(Asn) or Glu-tRNA(Gln) in organisms which lack either or both of asparaginyl-tRNA or glutaminyl-tRNA synthetases. The reaction takes place in the presence of glutamine and ATP through an activated phospho-Asp-tRNA(Asn) or phospho-Glu-tRNA(Gln). In Haloarcula marismortui (strain ATCC 43049 / DSM 3752 / JCM 8966 / VKM B-1809) (Halobacterium marismortui), this protein is Aspartyl/glutamyl-tRNA(Asn/Gln) amidotransferase subunit B.